A 285-amino-acid chain; its full sequence is Transcription initiation factor IIE subunit beta (285 aa).

2 stretches are compositionally biased toward polar residues: residues 1–10 (MSSLSDQLSS) and 33–44 (TPTAYLNSNDGH). The interval 1–56 (MSSLSDQLSSFKKKVANQPIYAKPQPRQPASPTPTAYLNSNDGHSSAASSPGSYSL) is disordered. Low complexity predominate over residues 45–55 (SSAASSPGSYS). The segment at residues 67–142 (YSQPADSGVG…FTFKPLHNIR (76 aa)) is a DNA-binding region (TFIIE beta). A disordered region spans residues 240–272 (PTSVDPSTVKRAGHNQTPKQKKPKTRRGKITNT). Residues 258–268 (KQKKPKTRRGK) show a composition bias toward basic residues.

This sequence belongs to the TFIIE beta subunit family. As to quaternary structure, TFIIE is a tetramer of two alpha (tfa1) and two beta (tfa2) subunits. TFIIE associates with RNA polymerase II via the beta subunit.

It is found in the nucleus. Its function is as follows. Recruits TFIIH to the initiation complex and stimulates the RNA polymerase II C-terminal domain kinase and DNA-dependent ATPase activities of TFIIH. Both TFIIH and TFIIE are required for promoter clearance by RNA polymerase. In Schizosaccharomyces pombe (strain 972 / ATCC 24843) (Fission yeast), this protein is Transcription initiation factor IIE subunit beta (tfa2).